Reading from the N-terminus, the 339-residue chain is Ketol-acid reductoisomerase (NADP(+)) (339 aa).

The KARI N-terminal Rossmann domain maps to 1–182 (MRVYYDRDAD…GGGRAGIIET (182 aa)). NADP(+)-binding positions include 24–27 (YGSQ), arginine 48, serine 51, threonine 53, and 83–86 (DELQ). Residue histidine 108 is part of the active site. Residue glycine 134 participates in NADP(+) binding. The KARI C-terminal knotted domain maps to 183-328 (TFREECETDL…AKLREMMPWI (146 aa)). Mg(2+) contacts are provided by aspartate 191, glutamate 195, glutamate 227, and glutamate 231. Serine 252 lines the substrate pocket.

This sequence belongs to the ketol-acid reductoisomerase family. Mg(2+) is required as a cofactor.

It catalyses the reaction (2R)-2,3-dihydroxy-3-methylbutanoate + NADP(+) = (2S)-2-acetolactate + NADPH + H(+). The enzyme catalyses (2R,3R)-2,3-dihydroxy-3-methylpentanoate + NADP(+) = (S)-2-ethyl-2-hydroxy-3-oxobutanoate + NADPH + H(+). It functions in the pathway amino-acid biosynthesis; L-isoleucine biosynthesis; L-isoleucine from 2-oxobutanoate: step 2/4. The protein operates within amino-acid biosynthesis; L-valine biosynthesis; L-valine from pyruvate: step 2/4. Involved in the biosynthesis of branched-chain amino acids (BCAA). Catalyzes an alkyl-migration followed by a ketol-acid reduction of (S)-2-acetolactate (S2AL) to yield (R)-2,3-dihydroxy-isovalerate. In the isomerase reaction, S2AL is rearranged via a Mg-dependent methyl migration to produce 3-hydroxy-3-methyl-2-ketobutyrate (HMKB). In the reductase reaction, this 2-ketoacid undergoes a metal-dependent reduction by NADPH to yield (R)-2,3-dihydroxy-isovalerate. The chain is Ketol-acid reductoisomerase (NADP(+)) from Rhodopseudomonas palustris (strain BisA53).